The chain runs to 541 residues: MNPSTAQATAVVDELVRGGVREVVLCPGSRNAPLAFALQAADLEGRLRLHMRIDERTAGFLALGLAVAGKRPVPIVMTSGTAVANLGPAVLEANYARVPLVVLSANRPYEMLGTGANQTIEQLGLFGSQVRATISLGLAEDDAGQNSQWRSAVCRVLAAARGTRSGNAGPVHFDIPLREPLVPDVHAQGPVPQGRPGGAAWTTTQHATLDVAMDLDITPDTIVISGHGSALRPELAGLPTVAEPTAPLHGIPVHPMALPQLKPRQAVITGRPTLHRSVSKVLADPAVAVYALTTGPRWPDVSGNVLATGTRAVVTGAPDRAWINRCRTLSEHTDKAVRAQLAAHPKATGLHVAAAVMDALTDGDQLLLGASNPVRDAALVSYPAPKVRVLSNRGVAGIDGTVSAAVGAALAYEEGRTVALLGDLTFLHDASGLLIGSGEPRPRDLTIVVANDDGGGIFELLEQGDPQYAGVFERVFGTPHGMDLAALCAAYRVEHHLVGLGELSTLLSTPDAPGDRGIRVLEVTTERSGLRELHAAVRAQL.

Belongs to the TPP enzyme family. MenD subfamily. In terms of assembly, homodimer. Requires Mg(2+) as cofactor. The cofactor is Mn(2+). It depends on thiamine diphosphate as a cofactor.

The enzyme catalyses isochorismate + 2-oxoglutarate + H(+) = 5-enolpyruvoyl-6-hydroxy-2-succinyl-cyclohex-3-ene-1-carboxylate + CO2. It functions in the pathway quinol/quinone metabolism; 1,4-dihydroxy-2-naphthoate biosynthesis; 1,4-dihydroxy-2-naphthoate from chorismate: step 2/7. The protein operates within quinol/quinone metabolism; menaquinone biosynthesis. In terms of biological role, catalyzes the thiamine diphosphate-dependent decarboxylation of 2-oxoglutarate and the subsequent addition of the resulting succinic semialdehyde-thiamine pyrophosphate anion to isochorismate to yield 2-succinyl-5-enolpyruvyl-6-hydroxy-3-cyclohexene-1-carboxylate (SEPHCHC). This chain is 2-succinyl-5-enolpyruvyl-6-hydroxy-3-cyclohexene-1-carboxylate synthase, found in Rhodococcus opacus (strain B4).